Here is a 79-residue protein sequence, read N- to C-terminus: Orally active insecticidal peptide (79 aa).

An N-terminal signal peptide occupies residues M1 to T19. Residues S20–R44 constitute a propeptide that is removed on maturation. 3 disulfide bridges follow: C46–C61, C53–C66, and C60–C73. A77 is subject to Alanine amide.

The protein belongs to the neurotoxin 03 (Tx2) family. 01 subfamily. In terms of tissue distribution, expressed by the venom gland.

It localises to the secreted. Its function is as follows. Probable ion channel inhibitor. Shows insecticidal activity when injected into mealworms. This Selenotypus plumipes (Australian featherleg tarantula) protein is Orally active insecticidal peptide.